A 312-amino-acid polypeptide reads, in one-letter code: Probable HTH-type transcriptional regulator LrhA (312 aa).

The region spanning 11 to 68 is the HTH lysR-type domain; sequence LDLDLLRTFVAVADLNTFAAAAAAVCRTQSAVSQQMQRLEQLVGKELFARHGRNKLLT. Positions 28 to 47 form a DNA-binding region, H-T-H motif; that stretch reads FAAAAAAVCRTQSAVSQQMQ.

It belongs to the LysR transcriptional regulatory family.

In terms of biological role, not known, does not seem to act on the proton translocating NADH dehydrogenase genes (nuoA-N) which are part of the lrhA operon. In Escherichia coli (strain K12), this protein is Probable HTH-type transcriptional regulator LrhA (lrhA).